A 122-amino-acid chain; its full sequence is Large ribosomal subunit protein uL14c (122 aa).

The protein belongs to the universal ribosomal protein uL14 family. In terms of assembly, part of the 50S ribosomal subunit.

Its subcellular location is the plastid. It is found in the chloroplast. Its function is as follows. Binds to 23S rRNA. This is Large ribosomal subunit protein uL14c from Acorus calamus (Sweet flag).